The following is a 443-amino-acid chain: 3-phosphoshikimate 1-carboxyvinyltransferase (443 aa).

3-phosphoshikimate is bound by residues Lys-24, Ser-25, and Arg-29. Lys-24 serves as a coordination point for phosphoenolpyruvate. Phosphoenolpyruvate is bound by residues Gly-96 and Arg-124. 3-phosphoshikimate is bound by residues Ser-168, Gln-170, Asp-316, and Lys-343. Phosphoenolpyruvate is bound at residue Gln-170. Asp-316 serves as the catalytic Proton acceptor. Phosphoenolpyruvate-binding residues include Arg-347 and Arg-391.

Belongs to the EPSP synthase family. In terms of assembly, monomer.

It is found in the cytoplasm. It catalyses the reaction 3-phosphoshikimate + phosphoenolpyruvate = 5-O-(1-carboxyvinyl)-3-phosphoshikimate + phosphate. Its pathway is metabolic intermediate biosynthesis; chorismate biosynthesis; chorismate from D-erythrose 4-phosphate and phosphoenolpyruvate: step 6/7. Catalyzes the transfer of the enolpyruvyl moiety of phosphoenolpyruvate (PEP) to the 5-hydroxyl of shikimate-3-phosphate (S3P) to produce enolpyruvyl shikimate-3-phosphate and inorganic phosphate. The chain is 3-phosphoshikimate 1-carboxyvinyltransferase from Dichelobacter nodosus (Bacteroides nodosus).